A 375-amino-acid chain; its full sequence is Succinyl-diaminopimelate desuccinylase (375 aa).

His-75 lines the Zn(2+) pocket. The active site involves Asp-77. Asp-106 is a binding site for Zn(2+). The Proton acceptor role is filled by Glu-136. Zn(2+) contacts are provided by Glu-137, Glu-165, and His-348.

Belongs to the peptidase M20A family. DapE subfamily. As to quaternary structure, homodimer. Zn(2+) serves as cofactor. The cofactor is Co(2+).

The enzyme catalyses N-succinyl-(2S,6S)-2,6-diaminopimelate + H2O = (2S,6S)-2,6-diaminopimelate + succinate. It functions in the pathway amino-acid biosynthesis; L-lysine biosynthesis via DAP pathway; LL-2,6-diaminopimelate from (S)-tetrahydrodipicolinate (succinylase route): step 3/3. Catalyzes the hydrolysis of N-succinyl-L,L-diaminopimelic acid (SDAP), forming succinate and LL-2,6-diaminopimelate (DAP), an intermediate involved in the bacterial biosynthesis of lysine and meso-diaminopimelic acid, an essential component of bacterial cell walls. The chain is Succinyl-diaminopimelate desuccinylase from Novosphingobium aromaticivorans (strain ATCC 700278 / DSM 12444 / CCUG 56034 / CIP 105152 / NBRC 16084 / F199).